The following is a 2142-amino-acid chain: U5 small nuclear ribonucleoprotein 200 kDa helicase (2142 aa).

Disordered stretches follow at residues 52–74 (MGDR…RQKR), 211–234 (EESE…QDEG), and 366–396 (RQLD…DGGA). Basic and acidic residues predominate over residues 369–391 (DTGKSEDQEEGEARGSKRGKGDA). The 184-residue stretch at 490–673 (KAALDSDENM…FLRVKPDKGL (184 aa)) folds into the Helicase ATP-binding 1 domain. 503–510 (APTGAGKT) is a binding site for ATP. The DEIH box motif lies at 615–618 (DEIH). Positions 684 to 917 (SLEQQYIGVT…GTVQHLQDAV (234 aa)) constitute a Helicase C-terminal 1 domain. The 306-residue stretch at 981 to 1286 (VTDLGRIASH…GAETQLPVSF (306 aa)) folds into the SEC63 1 domain. Residues 1337-1511 (NAVYNSDENV…WLGCNPNATF (175 aa)) enclose the Helicase ATP-binding 2 domain. 1350-1357 (APTGSGKM) is an ATP binding site. Residues 1453 to 1456 (DELQ) carry the DELQ box motif. One can recognise a Helicase C-terminal 2 domain in the interval 1544 to 1752 (PVYNAILKYS…TIENKQDAVD (209 aa)). An SEC63 2 domain is found at 1811 to 2128 (PLNLGMIAAY…GCDQEYKFSI (318 aa)).

This sequence belongs to the helicase family. SKI2 subfamily.

It localises to the nucleus. It carries out the reaction ATP + H2O = ADP + phosphate + H(+). Functionally, catalyzes the ATP-dependent unwinding of U4/U6 RNA duplices, an essential step in the assembly of a catalytically active spliceosome. Plays a role in pre-mRNA splicing. In Drosophila melanogaster (Fruit fly), this protein is U5 small nuclear ribonucleoprotein 200 kDa helicase.